Here is a 542-residue protein sequence, read N- to C-terminus: Chaperonin GroEL 2 (542 aa).

Residues 30 to 33 (TLGP), Lys-51, 87 to 91 (DGTTT), Gly-415, and Asp-496 each bind ATP.

This sequence belongs to the chaperonin (HSP60) family. As to quaternary structure, forms a cylinder of 14 subunits composed of two heptameric rings stacked back-to-back. Interacts with the co-chaperonin GroES.

The protein resides in the cytoplasm. The catalysed reaction is ATP + H2O + a folded polypeptide = ADP + phosphate + an unfolded polypeptide.. Functionally, together with its co-chaperonin GroES, plays an essential role in assisting protein folding. The GroEL-GroES system forms a nano-cage that allows encapsulation of the non-native substrate proteins and provides a physical environment optimized to promote and accelerate protein folding. The protein is Chaperonin GroEL 2 of Rhizobium leguminosarum.